A 921-amino-acid chain; its full sequence is Inter-alpha-trypsin inhibitor heavy chain H4 (921 aa).

A signal peptide spans 1–27 (MKTLSPTGYGLLLVLPLLLAVLQSTTA). A VIT domain is found at 28–146 (HKNDINIYSL…KVTFELVYEE (119 aa)). 3 N-linked (GlcNAc...) asparagine glycosylation sites follow: Asn80, Asn205, and Asn242. The VWFA domain occupies 270 to 428 (PKNVIFVIDT…YAFLEKMALE (159 aa)). Asn513 and Asn577 each carry an N-linked (GlcNAc...) asparagine glycan. Residues 591–646 (KPEGQEQSQVAEKPVENGNRQGNTHSGHSSFQFHSVGDRTSRLTGGSSVDPVFSHR) are disordered. Positions 608-623 (GNRQGNTHSGHSSFQF) are enriched in polar residues. Thr712 carries O-linked (GalNAc...) threonine glycosylation. A disulfide bond links Cys738 and Cys916.

It belongs to the ITIH family. In terms of assembly, interacts (via C-terminus) with DNAJC1 (via SANT 2 domain). Appears to be both N- and O-glycosylated. In terms of processing, cleaved by plasma kallikrein to yield 55- and 25-kDa fragments. Liver specific.

Its subcellular location is the secreted. Type II acute-phase protein (APP) involved in inflammatory responses to trauma. May also play a role in liver development or regeneration. The sequence is that of Inter-alpha-trypsin inhibitor heavy chain H4 (ITIH4) from Sus scrofa (Pig).